We begin with the raw amino-acid sequence, 227 residues long: Germin-like protein 3-5 (227 aa).

A signal peptide spans 1 to 29 (MEYGFKAAGLVFVVLLLQQAPVLIRATDA). Cys36 and Cys51 are disulfide-bonded. Positions 65-217 (SKIATGGDVN…ALRVDAGVVE (153 aa)) constitute a Cupin type-1 domain. 2 N-linked (GlcNAc...) asparagine glycosylation sites follow: Asn78 and Asn81. The Mn(2+) site is built by His114, His116, Glu121, and His163.

The protein belongs to the germin family. Oligomer (believed to be a pentamer but probably hexamer).

Its subcellular location is the secreted. The protein localises to the extracellular space. It is found in the apoplast. In terms of biological role, may play a role in plant defense. Probably has no oxalate oxidase activity even if the active site is conserved. This is Germin-like protein 3-5 from Oryza sativa subsp. japonica (Rice).